The sequence spans 413 residues: Histidine--tRNA ligase (413 aa).

It belongs to the class-II aminoacyl-tRNA synthetase family. In terms of assembly, homodimer.

Its subcellular location is the cytoplasm. It catalyses the reaction tRNA(His) + L-histidine + ATP = L-histidyl-tRNA(His) + AMP + diphosphate + H(+). The polypeptide is Histidine--tRNA ligase (Geobacter sulfurreducens (strain ATCC 51573 / DSM 12127 / PCA)).